Reading from the N-terminus, the 296-residue chain is Remorin 4.1 (296 aa).

Disordered regions lie at residues 1-78, 121-142, and 242-266; these read MLTL…SGEN, TRIG…DSNP, and EKTQ…EGKR. Residues 21–39 are compositionally biased toward basic and acidic residues; the sequence is ASDRRDETPSSEIVVRDIH. Polar residues-rich tracts occupy residues 41 to 53 and 62 to 78; these read MTTT…PQQR and PSRS…SGEN. 2 stretches are compositionally biased toward basic and acidic residues: residues 121–135 and 253–266; these read TRIG…HGQV and RKAE…EGKR. The stretch at 226–261 forms a coiled coil; it reads MKKIERKLEDRRAKAMEKTQNKVAKAQRKAEERRAT.

It belongs to the remorin family. In terms of assembly, forms homodimer and heterodimer with REM4.2. Interacts with KIN11. Post-translationally, phosphorylated by KIN11. Probably ubiquitinated and degraded by the 26S proteasome pathway. In terms of tissue distribution, predominantly detected in bud, stem, root, flower, silique, and leaves, and enhanced dramatically in senescence leaf.

Its subcellular location is the cell membrane. Collaborates with REM4.2 to positively regulate the BCTV and BSCTV susceptibility. The protein is Remorin 4.1 of Arabidopsis thaliana (Mouse-ear cress).